The primary structure comprises 104 residues: Gallinacin-11 (104 aa).

A signal peptide spans 1-22 (MKLFSCLMALLLFLLQAVPGLG). Disulfide bonds link Cys30/Cys60, Cys37/Cys53, and Cys43/Cys61.

This sequence belongs to the beta-defensin family. As to expression, detected in outer membrane of the vitelline layer of the egg (at protein level). Expressed in the liver, gall bladder, kidney, testis, ovary and male and female reproductive tracts. Expressed in the ovarian stroma, but not in the ovarian follicles. No expression is detected in bone marrow.

The protein localises to the secreted. It is found in the cytoplasmic granule. Functionally, has bactericidal activity. The chain is Gallinacin-11 (GAL11) from Gallus gallus (Chicken).